We begin with the raw amino-acid sequence, 316 residues long: MQELRFVLIVVGALAIAALLFHGLWSSKKEGKAKFGNKPLGKLDVDQGDKDSVEQERSFAPATEDDFEIIRKDRKEPDFGMENTFDSKFEADPLLGGVAEEKHSVKEEAEEIPSFVAMKNDVEDVAIQPSEVEEPMQEVVEEEIMPSAFDAPKQEMEMVEEVAPAVVEQPEEPKPEPEMQVIVLNVHCAGEEPFIGTELFDSMQQNGLIYGEMHIFHRHVDLSGNGKVLFSVANMMHPGTLEHGDPAEFSTKGISFFMTLPCYGEAEQNFNLMLRTAQQIADDMGGNVLDDKRNLMTPDRLAAYRRQIVEFNAANA.

Residues 1 to 5 (MQELR) lie on the Periplasmic side of the membrane. Residues 6 to 26 (FVLIVVGALAIAALLFHGLWS) traverse the membrane as a helical segment. Topologically, residues 27–316 (SKKEGKAKFG…QIVEFNAANA (290 aa)) are cytoplasmic. Residues 36 to 65 (GNKPLGKLDVDQGDKDSVEQERSFAPATED) are disordered. Residues 41–57 (GKLDVDQGDKDSVEQER) are compositionally biased toward basic and acidic residues.

This sequence belongs to the ZipA family. As to quaternary structure, interacts with FtsZ via their C-terminal domains.

It localises to the cell inner membrane. Essential cell division protein that stabilizes the FtsZ protofilaments by cross-linking them and that serves as a cytoplasmic membrane anchor for the Z ring. Also required for the recruitment to the septal ring of downstream cell division proteins. This is Cell division protein ZipA from Vibrio parahaemolyticus serotype O3:K6 (strain RIMD 2210633).